Consider the following 230-residue polypeptide: tRNA (guanine-N(1)-)-methyltransferase (230 aa).

S-adenosyl-L-methionine contacts are provided by residues G114 and 138-143 (IGDYVL).

It belongs to the RNA methyltransferase TrmD family. As to quaternary structure, homodimer.

Its subcellular location is the cytoplasm. It carries out the reaction guanosine(37) in tRNA + S-adenosyl-L-methionine = N(1)-methylguanosine(37) in tRNA + S-adenosyl-L-homocysteine + H(+). In terms of biological role, specifically methylates guanosine-37 in various tRNAs. In Rhodococcus jostii (strain RHA1), this protein is tRNA (guanine-N(1)-)-methyltransferase.